A 238-amino-acid chain; its full sequence is ATP synthase subunit a (238 aa).

The next 5 membrane-spanning stretches (helical) occupy residues 18 to 38, 76 to 96, 114 to 134, 166 to 186, and 193 to 213; these read LTLL…VFWA, YSLL…LGLF, NLAF…IEGV, SLAI…GLIV, and VYWW…SVFI.

Belongs to the ATPase A chain family. F-type ATPases have 2 components, CF(1) - the catalytic core - and CF(0) - the membrane proton channel. CF(1) has five subunits: alpha(3), beta(3), gamma(1), delta(1), epsilon(1). CF(0) has three main subunits: a(1), b(2) and c(9-12). The alpha and beta chains form an alternating ring which encloses part of the gamma chain. CF(1) is attached to CF(0) by a central stalk formed by the gamma and epsilon chains, while a peripheral stalk is formed by the delta and b chains.

It is found in the cell membrane. Its function is as follows. Key component of the proton channel; it plays a direct role in the translocation of protons across the membrane. This chain is ATP synthase subunit a, found in Streptococcus pyogenes serotype M49 (strain NZ131).